The sequence spans 98 residues: NADH-ubiquinone oxidoreductase chain 4L (98 aa).

3 consecutive transmembrane segments (helical) span residues 1–21 (MSLVYMNIMIAFSISLLGLLM), 25–45 (HLMSSLLCLEGMMLALFILST), and 67–87 (AACEAAVGLSLLVMVSNTYGV).

This sequence belongs to the complex I subunit 4L family. In terms of assembly, core subunit of respiratory chain NADH dehydrogenase (Complex I) which is composed of 45 different subunits.

It is found in the mitochondrion inner membrane. It catalyses the reaction a ubiquinone + NADH + 5 H(+)(in) = a ubiquinol + NAD(+) + 4 H(+)(out). Core subunit of the mitochondrial membrane respiratory chain NADH dehydrogenase (Complex I) which catalyzes electron transfer from NADH through the respiratory chain, using ubiquinone as an electron acceptor. Part of the enzyme membrane arm which is embedded in the lipid bilayer and involved in proton translocation. This is NADH-ubiquinone oxidoreductase chain 4L (MT-ND4L) from Talpa europaea (European mole).